A 179-amino-acid chain; its full sequence is Putative undecaprenyl-phosphate N-acetylgalactosaminyl 1-phosphate transferase (179 aa).

A helical membrane pass occupies residues 39–59 (IWFALIGLAIALPMIAVFSIL).

It belongs to the bacterial sugar transferase family.

The protein resides in the cell membrane. The enzyme catalyses di-trans,octa-cis-undecaprenyl phosphate + UDP-N-acetyl-alpha-D-galactosamine = N-acetyl-alpha-D-galactosaminyl-di-trans,octa-cis-undecaprenyl diphosphate + UMP. It functions in the pathway cell wall biogenesis; teichuronic acid biosynthesis. Might mediate the very first reaction in teichuronic synthesis, i.e. the formation of lipid-linked N-acetylglucosamine. This chain is Putative undecaprenyl-phosphate N-acetylgalactosaminyl 1-phosphate transferase (tuaA), found in Bacillus subtilis (strain 168).